The primary structure comprises 754 residues: 5-methyltetrahydropteroyltriglutamate--homocysteine methyltransferase (754 aa).

5-methyltetrahydropteroyltri-L-glutamate-binding positions include 19–22 (RELK) and K121. Residues 423–425 (IGS) and E476 contribute to the L-homocysteine site. L-methionine contacts are provided by residues 423–425 (IGS) and E476. 5-methyltetrahydropteroyltri-L-glutamate is bound by residues 507-508 (RC) and W553. D591 is a binding site for L-homocysteine. D591 contacts L-methionine. 5-methyltetrahydropteroyltri-L-glutamate is bound at residue E597. Residues H633, C635, and E657 each contribute to the Zn(2+) site. H686 acts as the Proton donor in catalysis. C718 provides a ligand contact to Zn(2+).

This sequence belongs to the vitamin-B12 independent methionine synthase family. It depends on Zn(2+) as a cofactor.

It carries out the reaction 5-methyltetrahydropteroyltri-L-glutamate + L-homocysteine = tetrahydropteroyltri-L-glutamate + L-methionine. Its pathway is amino-acid biosynthesis; L-methionine biosynthesis via de novo pathway; L-methionine from L-homocysteine (MetE route): step 1/1. Its function is as follows. Catalyzes the transfer of a methyl group from 5-methyltetrahydrofolate to homocysteine resulting in methionine formation. The sequence is that of 5-methyltetrahydropteroyltriglutamate--homocysteine methyltransferase from Corynebacterium efficiens (strain DSM 44549 / YS-314 / AJ 12310 / JCM 11189 / NBRC 100395).